Consider the following 312-residue polypeptide: Acetyl-coenzyme A carboxylase carboxyl transferase subunit alpha (312 aa).

Residues Asn-36–Glu-286 form the CoA carboxyltransferase C-terminal domain.

Belongs to the AccA family. In terms of assembly, acetyl-CoA carboxylase is a heterohexamer composed of biotin carboxyl carrier protein (AccB), biotin carboxylase (AccC) and two subunits each of ACCase subunit alpha (AccA) and ACCase subunit beta (AccD).

The protein resides in the cytoplasm. The enzyme catalyses N(6)-carboxybiotinyl-L-lysyl-[protein] + acetyl-CoA = N(6)-biotinyl-L-lysyl-[protein] + malonyl-CoA. The protein operates within lipid metabolism; malonyl-CoA biosynthesis; malonyl-CoA from acetyl-CoA: step 1/1. Functionally, component of the acetyl coenzyme A carboxylase (ACC) complex. First, biotin carboxylase catalyzes the carboxylation of biotin on its carrier protein (BCCP) and then the CO(2) group is transferred by the carboxyltransferase to acetyl-CoA to form malonyl-CoA. The protein is Acetyl-coenzyme A carboxylase carboxyl transferase subunit alpha of Campylobacter jejuni subsp. jejuni serotype O:23/36 (strain 81-176).